Consider the following 77-residue polypeptide: U-actitoxin-Avd12a (77 aa).

A signal peptide spans 1 to 23 (MALFRMLFLCAVLVLLTSKEGMS). Residues 24 to 29 (YEEPEN) constitute a propeptide that is removed on maturation. An EGF-like domain is found at 31–73 (EGVACTGQYAESFCLNGGTCRYIQSIGEYYCICNGDYTGHRCE). 3 cysteine pairs are disulfide-bonded: cysteine 35-cysteine 50, cysteine 44-cysteine 61, and cysteine 63-cysteine 72.

This sequence belongs to the EGF domain peptide family.

The protein localises to the secreted. It is found in the nematocyst. In terms of biological role, has both toxic and EGF activity. Its EGF activity consists of rounding cells (morphological change) and inducing tyrosine phosphorylation of the EGFR in A431 cells, but with a lower potency that human EGF. The chain is U-actitoxin-Avd12a from Anemonia viridis (Snakelocks anemone).